A 237-amino-acid chain; its full sequence is Orotidine 5'-phosphate decarboxylase (237 aa).

Residues Asp-17, Lys-39, 66–75 (DLKLHDIGNT), Thr-121, Arg-182, Gln-191, Gly-211, and Arg-212 each bind substrate. The active-site Proton donor is the Lys-68.

This sequence belongs to the OMP decarboxylase family. Type 1 subfamily. Homodimer.

The enzyme catalyses orotidine 5'-phosphate + H(+) = UMP + CO2. Its pathway is pyrimidine metabolism; UMP biosynthesis via de novo pathway; UMP from orotate: step 2/2. In terms of biological role, catalyzes the decarboxylation of orotidine 5'-monophosphate (OMP) to uridine 5'-monophosphate (UMP). In Rhodopseudomonas palustris (strain ATCC BAA-98 / CGA009), this protein is Orotidine 5'-phosphate decarboxylase.